Here is a 362-residue protein sequence, read N- to C-terminus: UDP-N-acetylglucosamine--N-acetylmuramyl-(pentapeptide) pyrophosphoryl-undecaprenol N-acetylglucosamine transferase (362 aa).

Residues 21–23 (TGG), Asn-129, Arg-170, Ser-198, and Gln-290 contribute to the UDP-N-acetyl-alpha-D-glucosamine site.

Belongs to the glycosyltransferase 28 family. MurG subfamily.

The protein localises to the cell inner membrane. The catalysed reaction is di-trans,octa-cis-undecaprenyl diphospho-N-acetyl-alpha-D-muramoyl-L-alanyl-D-glutamyl-meso-2,6-diaminopimeloyl-D-alanyl-D-alanine + UDP-N-acetyl-alpha-D-glucosamine = di-trans,octa-cis-undecaprenyl diphospho-[N-acetyl-alpha-D-glucosaminyl-(1-&gt;4)]-N-acetyl-alpha-D-muramoyl-L-alanyl-D-glutamyl-meso-2,6-diaminopimeloyl-D-alanyl-D-alanine + UDP + H(+). It functions in the pathway cell wall biogenesis; peptidoglycan biosynthesis. Cell wall formation. Catalyzes the transfer of a GlcNAc subunit on undecaprenyl-pyrophosphoryl-MurNAc-pentapeptide (lipid intermediate I) to form undecaprenyl-pyrophosphoryl-MurNAc-(pentapeptide)GlcNAc (lipid intermediate II). The protein is UDP-N-acetylglucosamine--N-acetylmuramyl-(pentapeptide) pyrophosphoryl-undecaprenol N-acetylglucosamine transferase of Synechococcus sp. (strain JA-3-3Ab) (Cyanobacteria bacterium Yellowstone A-Prime).